The sequence spans 3092 residues: Probable polyketide synthase 45 (3092 aa).

Residues 10–430 enclose the Ketosynthase family 3 (KS3) domain; the sequence is DNDVAIIGIG…GSNVCLILTE (421 aa). Active-site for beta-ketoacyl synthase activity residues include Cys-170, His-315, and His-353. Residues 640–673 form an acyl/malonyl transferase region; the sequence is GILASISIGHSLGEVSSAVCSGMIDLETGCFIIY. Catalysis depends on Ser-650, which acts as the For acyl/malonyl transferase activity. Positions 967 to 1087 are N-terminal hotdog fold; that stretch reads INQLGNRNER…GKFSITKHND (121 aa). Residues 967 to 1254 enclose the PKS/mFAS DH domain; it reads INQLGNRNER…YTQLTPYKNQ (288 aa). The active-site Proton acceptor; for dehydratase activity is the His-999. The C-terminal hotdog fold stretch occupies residues 1103-1254; the sequence is NFVTIQKKEL…YTQLTPYKNQ (152 aa). Asp-1165 acts as the Proton donor; for dehydratase activity in catalysis. Residues 2566 to 2644 form the Carrier domain; that stretch reads SDDLSIREEI…QLIQSVTDAM (79 aa). Ser-2604 is subject to O-(pantetheine 4'-phosphoryl)serine. Residues 2705–2725 form a helical membrane-spanning segment; it reads NTVFLTGSSGFIGIYILFYLI.

Pantetheine 4'-phosphate serves as cofactor.

The protein localises to the membrane. Probable polyketide synthase. The polypeptide is Probable polyketide synthase 45 (pks45) (Dictyostelium discoideum (Social amoeba)).